Consider the following 401-residue polypeptide: Phosphoglycerate kinase (401 aa).

Substrate is bound by residues 20 to 22 (DFN), R35, 58 to 61 (HLGR), R117, and R154. Residues K204, G298, E329, and 358–361 (GGDS) each bind ATP.

The protein belongs to the phosphoglycerate kinase family. Monomer.

It localises to the cytoplasm. It catalyses the reaction (2R)-3-phosphoglycerate + ATP = (2R)-3-phospho-glyceroyl phosphate + ADP. The protein operates within carbohydrate degradation; glycolysis; pyruvate from D-glyceraldehyde 3-phosphate: step 2/5. The sequence is that of Phosphoglycerate kinase from Bifidobacterium longum subsp. infantis (strain ATCC 15697 / DSM 20088 / JCM 1222 / NCTC 11817 / S12).